Reading from the N-terminus, the 310-residue chain is Cytochrome f (310 aa).

The first 23 residues, 1 to 23, serve as a signal peptide directing secretion; sequence MRRLLSSTFAALIVGLAVFSAPA. Heme contacts are provided by tyrosine 28, cysteine 48, cysteine 51, and histidine 52. A helical transmembrane segment spans residues 277–297; the sequence is IYGMLAFFAAVALAQIMLVLK.

This sequence belongs to the cytochrome f family. As to quaternary structure, the 4 large subunits of the cytochrome b6-f complex are cytochrome b6, subunit IV (17 kDa polypeptide, PetD), cytochrome f and the Rieske protein, while the 4 small subunits are PetG, PetL, PetM and PetN. The complex functions as a dimer. It depends on heme as a cofactor.

It localises to the cellular thylakoid membrane. In terms of biological role, component of the cytochrome b6-f complex, which mediates electron transfer between photosystem II (PSII) and photosystem I (PSI), cyclic electron flow around PSI, and state transitions. The polypeptide is Cytochrome f (Synechococcus sp. (strain CC9311)).